A 236-amino-acid polypeptide reads, in one-letter code: Small ribosomal subunit protein uS2c (236 aa).

This sequence belongs to the universal ribosomal protein uS2 family.

The protein localises to the plastid. Its subcellular location is the chloroplast. This Lemna minor (Common duckweed) protein is Small ribosomal subunit protein uS2c (rps2).